The chain runs to 221 residues: Immediate early response gene 2 protein (221 aa).

At Met1 the chain carries N-acetylmethionine. Residues 105-155 are disordered; that stretch reads ETPALCDPPPARVSRKRRSSSDLSDGSDAGLVPSKKARLEEVEGEATSEVP. Residues 125-136 are compositionally biased toward low complexity; the sequence is SDLSDGSDAGLV.

The protein belongs to the IER family.

Its subcellular location is the cytoplasm. The protein localises to the nucleus. DNA-binding protein that seems to act as a transcription factor. Involved in the regulation of neuronal differentiation, acts upon JNK-signaling pathway activation and plays a role in neurite outgrowth in hippocampal cells. May mediate with FIBP FGF-signaling in the establishment of laterality in the embryo. Promotes cell motility, seems to stimulate tumor metastasis. This is Immediate early response gene 2 protein (Ier2) from Mus musculus (Mouse).